Reading from the N-terminus, the 273-residue chain is Formamidopyrimidine-DNA glycosylase (273 aa).

Residue P2 is the Schiff-base intermediate with DNA of the active site. The active-site Proton donor is E3. Residue K60 is the Proton donor; for beta-elimination activity of the active site. DNA contacts are provided by H94, R113, and K154. The FPG-type zinc finger occupies E239–A273. R263 acts as the Proton donor; for delta-elimination activity in catalysis.

Belongs to the FPG family. Monomer. Requires Zn(2+) as cofactor.

It carries out the reaction Hydrolysis of DNA containing ring-opened 7-methylguanine residues, releasing 2,6-diamino-4-hydroxy-5-(N-methyl)formamidopyrimidine.. The catalysed reaction is 2'-deoxyribonucleotide-(2'-deoxyribose 5'-phosphate)-2'-deoxyribonucleotide-DNA = a 3'-end 2'-deoxyribonucleotide-(2,3-dehydro-2,3-deoxyribose 5'-phosphate)-DNA + a 5'-end 5'-phospho-2'-deoxyribonucleoside-DNA + H(+). In terms of biological role, involved in base excision repair of DNA damaged by oxidation or by mutagenic agents. Acts as a DNA glycosylase that recognizes and removes damaged bases. Has a preference for oxidized purines, such as 7,8-dihydro-8-oxoguanine (8-oxoG). Has AP (apurinic/apyrimidinic) lyase activity and introduces nicks in the DNA strand. Cleaves the DNA backbone by beta-delta elimination to generate a single-strand break at the site of the removed base with both 3'- and 5'-phosphates. This chain is Formamidopyrimidine-DNA glycosylase, found in Herpetosiphon aurantiacus (strain ATCC 23779 / DSM 785 / 114-95).